Consider the following 175-residue polypeptide: Adenine phosphoribosyltransferase (175 aa).

It belongs to the purine/pyrimidine phosphoribosyltransferase family. Homodimer.

It localises to the cytoplasm. The enzyme catalyses AMP + diphosphate = 5-phospho-alpha-D-ribose 1-diphosphate + adenine. Its pathway is purine metabolism; AMP biosynthesis via salvage pathway; AMP from adenine: step 1/1. Its function is as follows. Catalyzes a salvage reaction resulting in the formation of AMP, that is energically less costly than de novo synthesis. The sequence is that of Adenine phosphoribosyltransferase from Francisella tularensis subsp. holarctica (strain FTNF002-00 / FTA).